A 404-amino-acid chain; its full sequence is 2,3-diketo-5-methylthiopentyl-1-phosphate enolase (404 aa).

Residue K91 is the Proton acceptor of the active site. Residues K140, 166–169, H257, G329, and 351–352 contribute to the substrate site; these read KDDE and GG. Mg(2+) contacts are provided by K166, D168, and E169. Residue K166 is modified to N6-carboxylysine.

The protein belongs to the RuBisCO large chain family. Type IV subfamily. Homodimer. Requires Mg(2+) as cofactor.

It carries out the reaction 5-methylsulfanyl-2,3-dioxopentyl phosphate = 2-hydroxy-5-methylsulfanyl-3-oxopent-1-enyl phosphate. Its pathway is amino-acid biosynthesis; L-methionine biosynthesis via salvage pathway; L-methionine from S-methyl-5-thio-alpha-D-ribose 1-phosphate: step 3/6. Functionally, catalyzes the enolization of 2,3-diketo-5-methylthiopentyl-1-phosphate (DK-MTP-1-P) into 2-hydroxy-3-keto-5-methylthiopentenyl-1-phosphate (HK-MTPenyl-1-P). The polypeptide is 2,3-diketo-5-methylthiopentyl-1-phosphate enolase (Bacillus velezensis (strain DSM 23117 / BGSC 10A6 / LMG 26770 / FZB42) (Bacillus amyloliquefaciens subsp. plantarum)).